The primary structure comprises 146 residues: Interleukin-13 (146 aa).

The N-terminal stretch at 1-24 (MHPLLNPLLLALGLMALLLTTVIA) is a signal peptide. Asn-52, Asn-63, Asn-71, and Asn-86 each carry an N-linked (GlcNAc...) asparagine glycan. 2 disulfides stabilise this stretch: Cys-62-Cys-90 and Cys-78-Cys-104.

Belongs to the IL-4/IL-13 family. Interacts with IL13RA2.

It localises to the secreted. Its function is as follows. Cytokine that plays important roles in allergic inflammation and immune response to parasite infection. Synergizes with IL2 in regulating interferon-gamma synthesis. Stimulates B-cell proliferation, and activation of eosinophils, basophils, and mast cells. Plays an important role in controlling IL33 activity by modulating the production of transmembrane and soluble forms of interleukin-1 receptor-like 1/IL1RL1. Displays the capacity to antagonize Th1-driven proinflammatory immune response and downregulates synthesis of many proinflammatory cytokines including IL1, IL6, IL10, IL12 and TNF-alpha through a mechanism that partially involves suppression of NF-kappa-B. Also functions on nonhematopoietic cells, including endothelial cells where it induces vascular cell adhesion protein 1/VCAM1, which is important in the recruitment of eosinophils. Exerts its biological effects through its receptors which comprises the IL4R chain and the IL13RA1 chain, to activate JAK1 and TYK2, leading to the activation of STAT6. Aside from IL13RA1, another receptor IL13RA2 acts as a high affinity decoy for IL13 and mediates internalization and depletion of extracellular IL13. The polypeptide is Interleukin-13 (IL13) (Homo sapiens (Human)).